The sequence spans 198 residues: MDFYPVAIEKLIEEFAKLPGIGYKTAQRLTLHVLNLPSDEVREFANALVKARGTIKYCSICGNYTDSDPCAICSNPNRDESIICVIEQPKDIMSLEKIREYNGTYHVLHGVISPMSGKGPEDINLKGLIRRINENVKEVIVATNPNVEGEATAMYISKILKPLGVKVTRIAHGVPVGGDLEYADEVTLSKALEGRVEL.

A C4-type zinc finger spans residues 58–73 (CSICGNYTDSDPCAIC). A Toprim domain is found at 81-175 (SIICVIEQPK…KVTRIAHGVP (95 aa)).

This sequence belongs to the RecR family.

May play a role in DNA repair. It seems to be involved in an RecBC-independent recombinational process of DNA repair. It may act with RecF and RecO. The chain is Recombination protein RecR from Clostridium novyi (strain NT).